Here is a 152-residue protein sequence, read N- to C-terminus: Ribosome maturation factor RimP (152 aa).

It belongs to the RimP family.

Its subcellular location is the cytoplasm. Required for maturation of 30S ribosomal subunits. The chain is Ribosome maturation factor RimP from Burkholderia orbicola (strain MC0-3).